A 159-amino-acid polypeptide reads, in one-letter code: Transmembrane protein 42 (159 aa).

Helical transmembrane passes span 37–57 (FWGVFNCLCAGAFGALAAASA), 68–88 (GFCVLGIIMMATTNSLMWTFF), 100–120 (IASVTVTFSNILNSAFLGFVL), and 124–144 (CQEVLWWGGVFLILCGLTLIH).

Its subcellular location is the membrane. The sequence is that of Transmembrane protein 42 (TMEM42) from Bos taurus (Bovine).